The sequence spans 95 residues: FMRFamide-like neuropeptides 16 (95 aa).

An N-terminal signal peptide occupies residues 1-24; sequence MSLSGFEFSSIIAVLLLLIQLSSA. The propeptide occupies 25-58; sequence AVLPVDYASQYGVASADEMTALPEEGSLFAERPA. Residues phenylalanine 67, phenylalanine 77, and phenylalanine 87 each carry the phenylalanine amide modification. A propeptide spanning residues 90 to 95 is cleaved from the precursor; it reads SAPFEQ.

This sequence belongs to the FARP (FMRFamide related peptide) family.

It is found in the secreted. In terms of biological role, FMRFamides and FMRFamide-like peptides are neuropeptides. AQTFVRF-amide inhibits the activity of dissected pharyngeal myogenic muscle system. This chain is FMRFamide-like neuropeptides 16 (flp-16), found in Caenorhabditis briggsae.